The primary structure comprises 169 residues: Der GTPase-activating protein YihI (169 aa).

Disordered stretches follow at residues 1-99 (MKPS…QAEL) and 146-169 (SYDD…LRGN). Positions 10 to 19 (SKGHAKARRK) are enriched in basic residues. Residues 20–30 (TREELDQEARD) are compositionally biased toward basic and acidic residues. Positions 31–40 (RKRQKKRRGH) are enriched in basic residues. The segment covering 49–58 (GNTTSGSKGQ) has biased composition (polar residues). The segment covering 147-159 (YDDDEEEEEDEKQ) has biased composition (acidic residues). Over residues 160-169 (EDMMRLLRGN) the composition is skewed to basic and acidic residues.

This sequence belongs to the YihI family. Interacts with Der.

A GTPase-activating protein (GAP) that modifies Der/EngA GTPase function. May play a role in ribosome biogenesis. This chain is Der GTPase-activating protein YihI, found in Escherichia coli O45:K1 (strain S88 / ExPEC).